The primary structure comprises 139 residues: Orientotoxin-2 (139 aa).

As to expression, expressed by the venom gland.

It localises to the secreted. The catalysed reaction is a 1,2-diacyl-sn-glycero-3-phosphocholine + H2O = a 1-acyl-sn-glycero-3-phosphocholine + a fatty acid + H(+). Its function is as follows. Has a highly toxic phospholipase A2 activity. In Vespa orientalis (Oriental hornet), this protein is Orientotoxin-2.